A 362-amino-acid polypeptide reads, in one-letter code: 3-dehydroquinate synthase (362 aa).

Residues 71-76, 105-109, 129-130, lysine 142, lysine 151, and 169-172 contribute to the NAD(+) site; these read DGEQYK, GVVGD, TT, and CLKT. Positions 184, 247, and 264 each coordinate Zn(2+).

It belongs to the sugar phosphate cyclases superfamily. Dehydroquinate synthase family. The cofactor is NAD(+). It depends on Co(2+) as a cofactor. Zn(2+) serves as cofactor.

The protein localises to the cytoplasm. The catalysed reaction is 7-phospho-2-dehydro-3-deoxy-D-arabino-heptonate = 3-dehydroquinate + phosphate. Its pathway is metabolic intermediate biosynthesis; chorismate biosynthesis; chorismate from D-erythrose 4-phosphate and phosphoenolpyruvate: step 2/7. Its function is as follows. Catalyzes the conversion of 3-deoxy-D-arabino-heptulosonate 7-phosphate (DAHP) to dehydroquinate (DHQ). This is 3-dehydroquinate synthase from Escherichia coli O157:H7.